Consider the following 505-residue polypeptide: ATP synthase subunit alpha (505 aa).

171–178 provides a ligand contact to ATP; sequence GDRQTGKT.

This sequence belongs to the ATPase alpha/beta chains family. In terms of assembly, F-type ATPases have 2 components, CF(1) - the catalytic core - and CF(0) - the membrane proton channel. CF(1) has five subunits: alpha(3), beta(3), gamma(1), delta(1), epsilon(1). CF(0) has three main subunits: a(1), b(2) and c(9-12). The alpha and beta chains form an alternating ring which encloses part of the gamma chain. CF(1) is attached to CF(0) by a central stalk formed by the gamma and epsilon chains, while a peripheral stalk is formed by the delta and b chains.

It is found in the cell inner membrane. It carries out the reaction ATP + H2O + 4 H(+)(in) = ADP + phosphate + 5 H(+)(out). Produces ATP from ADP in the presence of a proton gradient across the membrane. The alpha chain is a regulatory subunit. The protein is ATP synthase subunit alpha of Campylobacter curvus (strain 525.92).